A 413-amino-acid polypeptide reads, in one-letter code: Alpha-1-antitrypsin-like protein GS55-LT (413 aa).

A signal peptide spans 1–21 (MPSSISWGLLLLAGLSCLATG). 3 N-linked (GlcNAc...) asparagine glycosylation sites follow: Asn-65, Asn-102, and Asn-123. Residues 368–387 (RHTVKGPMALTLAPEVKFNR) form an RCL region.

The protein belongs to the serpin family.

It is found in the secreted. In terms of biological role, inhibitor of serine proteases. This Ictidomys tridecemlineatus (Thirteen-lined ground squirrel) protein is Alpha-1-antitrypsin-like protein GS55-LT.